Here is a 370-residue protein sequence, read N- to C-terminus: Proto-oncogene Wnt-1 (370 aa).

Residues 1-27 (MGLWALLPSWVSTTLLLALTALPAALA) form the signal peptide. A glycan (N-linked (GlcNAc...) asparagine) is linked at asparagine 29. Cystine bridges form between cysteine 93/cysteine 104, cysteine 143/cysteine 151, cysteine 153/cysteine 170, cysteine 218/cysteine 232, cysteine 220/cysteine 227, cysteine 299/cysteine 330, cysteine 315/cysteine 325, cysteine 329/cysteine 369, cysteine 345/cysteine 360, cysteine 347/cysteine 357, and cysteine 352/cysteine 353. The O-palmitoleoyl serine; by PORCN moiety is linked to residue serine 224. Asparagine 316 and asparagine 346 each carry an N-linked (GlcNAc...) asparagine glycan. N-linked (GlcNAc...) asparagine glycosylation is present at asparagine 359.

The protein belongs to the Wnt family. In terms of assembly, forms a soluble 1:1 complex with AFM; this prevents oligomerization and is required for prolonged biological activity. The complex with AFM may represent the physiological form in body fluids. Interacts with PORCN. Interacts with RSPO1, RSPO2 and RSPO3. Interacts with WLS. Palmitoleoylation is required for efficient binding to frizzled receptors. Palmitoleoylation is necessary for proper trafficking to cell surface. Depalmitoleoylated by NOTUM, leading to inhibit Wnt signaling pathway. Testis and mid-gestational embryos. In the testis, detected only in postmeiotic germ cells undergoing differentiation from round spermatids into mature spermatozoa. In the embryos, expression is restricted to the developing CNS in regions of the neural tube other than the telencephalon. Expressed in osteoblast; expression levels increase with advancing osteoblast differentiation. Expressed in the brain, femur, spleen, and hematopoietic bone marrow.

It is found in the secreted. It localises to the extracellular space. Its subcellular location is the extracellular matrix. Functionally, ligand for members of the frizzled family of seven transmembrane receptors. Acts in the canonical Wnt signaling pathway by promoting beta-catenin-dependent transcriptional activation. In some developmental processes, is also a ligand for the coreceptor RYK, thus triggering Wnt signaling. Plays an essential role in the development of the embryonic brain and central nervous system (CNS). Has a role in osteoblast function, bone development and bone homeostasis. This Mus musculus (Mouse) protein is Proto-oncogene Wnt-1 (Wnt1).